The chain runs to 79 residues: Ubiquinol-cytochrome c reductase complex assembly factor 5 (79 aa).

The Mitochondrial matrix segment spans residues methionine 1–arginine 20. Residues phenylalanine 21–asparagine 43 traverse the membrane as a helical segment. Topologically, residues tryptophan 44–asparagine 79 are mitochondrial intermembrane.

The protein belongs to the UQCC5 family. As to quaternary structure, interacts with respiratory complex III components Uqcc1 and RFeSP; the interactions are probably involved in the assembly and stability of the mitochondrial ubiquinol-cytochrome c reductase complex. Interacts with sloth2; the interaction stabilizes both components. As to expression, expressed in the brain.

Its subcellular location is the mitochondrion inner membrane. It is found in the mitochondrion. In terms of biological role, required for the assembly and stability of the mitochondrial ubiquinol-cytochrome c reductase complex (complex III (CIII) or cytochrome b-c1 complex), a multisubunit transmembrane complex that is part of the mitochondrial electron transport chain (ETC) which drives oxidative phosphorylation. This chain is Ubiquinol-cytochrome c reductase complex assembly factor 5, found in Drosophila melanogaster (Fruit fly).